We begin with the raw amino-acid sequence, 547 residues long: Chaperonin GroEL (547 aa).

Residues 30–33 (TLGP), K51, 87–91 (DGTTT), G415, and D496 each bind ATP.

This sequence belongs to the chaperonin (HSP60) family. As to quaternary structure, forms a cylinder of 14 subunits composed of two heptameric rings stacked back-to-back. Interacts with the co-chaperonin GroES.

It localises to the cytoplasm. The enzyme catalyses ATP + H2O + a folded polypeptide = ADP + phosphate + an unfolded polypeptide.. Its function is as follows. Together with its co-chaperonin GroES, plays an essential role in assisting protein folding. The GroEL-GroES system forms a nano-cage that allows encapsulation of the non-native substrate proteins and provides a physical environment optimized to promote and accelerate protein folding. This chain is Chaperonin GroEL, found in Mannheimia succiniciproducens (strain KCTC 0769BP / MBEL55E).